The sequence spans 142 residues: Large ribosomal subunit protein uL13 (142 aa).

It belongs to the universal ribosomal protein uL13 family. In terms of assembly, part of the 50S ribosomal subunit.

Its function is as follows. This protein is one of the early assembly proteins of the 50S ribosomal subunit, although it is not seen to bind rRNA by itself. It is important during the early stages of 50S assembly. The polypeptide is Large ribosomal subunit protein uL13 (Shigella dysenteriae serotype 1 (strain Sd197)).